A 293-amino-acid polypeptide reads, in one-letter code: Foldase protein PrsA 2 (293 aa).

An N-terminal signal peptide occupies residues 1–20; the sequence is MKKKLILGLVMMMALFSLAA. The N-palmitoyl cysteine moiety is linked to residue Cys21. A lipid anchor (S-diacylglycerol cysteine) is attached at Cys21. Positions 135–226 constitute a PpiC domain; sequence QPDITVSHIL…YGYHIIQMDK (92 aa).

It belongs to the PrsA family.

Its subcellular location is the cell membrane. It carries out the reaction [protein]-peptidylproline (omega=180) = [protein]-peptidylproline (omega=0). Its function is as follows. Plays a major role in protein secretion by helping the post-translocational extracellular folding of several secreted proteins. The sequence is that of Foldase protein PrsA 2 from Listeria monocytogenes serotype 4b (strain F2365).